We begin with the raw amino-acid sequence, 231 residues long: Phosphatidylserine decarboxylase proenzyme (231 aa).

Serine 189 serves as the catalytic Schiff-base intermediate with substrate; via pyruvic acid. A Pyruvic acid (Ser); by autocatalysis modification is found at serine 189.

This sequence belongs to the phosphatidylserine decarboxylase family. PSD-A subfamily. In terms of assembly, heterodimer of a large membrane-associated beta subunit and a small pyruvoyl-containing alpha subunit. Pyruvate serves as cofactor. Is synthesized initially as an inactive proenzyme. Formation of the active enzyme involves a self-maturation process in which the active site pyruvoyl group is generated from an internal serine residue via an autocatalytic post-translational modification. Two non-identical subunits are generated from the proenzyme in this reaction, and the pyruvate is formed at the N-terminus of the alpha chain, which is derived from the carboxyl end of the proenzyme. The post-translation cleavage follows an unusual pathway, termed non-hydrolytic serinolysis, in which the side chain hydroxyl group of the serine supplies its oxygen atom to form the C-terminus of the beta chain, while the remainder of the serine residue undergoes an oxidative deamination to produce ammonia and the pyruvoyl prosthetic group on the alpha chain.

Its subcellular location is the cell membrane. The catalysed reaction is a 1,2-diacyl-sn-glycero-3-phospho-L-serine + H(+) = a 1,2-diacyl-sn-glycero-3-phosphoethanolamine + CO2. The protein operates within phospholipid metabolism; phosphatidylethanolamine biosynthesis; phosphatidylethanolamine from CDP-diacylglycerol: step 2/2. Its function is as follows. Catalyzes the formation of phosphatidylethanolamine (PtdEtn) from phosphatidylserine (PtdSer). In Chelativorans sp. (strain BNC1), this protein is Phosphatidylserine decarboxylase proenzyme.